A 291-amino-acid polypeptide reads, in one-letter code: Elongation factor Ts (291 aa).

An involved in Mg(2+) ion dislocation from EF-Tu region spans residues 78–81; it reads TDFV.

Belongs to the EF-Ts family.

The protein localises to the cytoplasm. In terms of biological role, associates with the EF-Tu.GDP complex and induces the exchange of GDP to GTP. It remains bound to the aminoacyl-tRNA.EF-Tu.GTP complex up to the GTP hydrolysis stage on the ribosome. This Ureaplasma parvum serovar 3 (strain ATCC 27815 / 27 / NCTC 11736) protein is Elongation factor Ts.